A 180-amino-acid polypeptide reads, in one-letter code: Shikimate kinase (180 aa).

14–19 is a binding site for ATP; that stretch reads GAGKTC. Thr-18 serves as a coordination point for Mg(2+). Substrate is bound by residues Asp-36, Arg-60, and Gly-82. Arg-120 is an ATP binding site. Arg-139 lines the substrate pocket.

This sequence belongs to the shikimate kinase family. Monomer. It depends on Mg(2+) as a cofactor.

It localises to the cytoplasm. It carries out the reaction shikimate + ATP = 3-phosphoshikimate + ADP + H(+). The protein operates within metabolic intermediate biosynthesis; chorismate biosynthesis; chorismate from D-erythrose 4-phosphate and phosphoenolpyruvate: step 5/7. Catalyzes the specific phosphorylation of the 3-hydroxyl group of shikimic acid using ATP as a cosubstrate. The chain is Shikimate kinase from Stenotrophomonas maltophilia (strain R551-3).